We begin with the raw amino-acid sequence, 129 residues long: Glycine cleavage system H protein (129 aa).

The Lipoyl-binding domain maps to S23 to K104. Position 64 is an N6-lipoyllysine (K64).

This sequence belongs to the GcvH family. In terms of assembly, the glycine cleavage system is composed of four proteins: P, T, L and H. Requires (R)-lipoate as cofactor.

Its function is as follows. The glycine cleavage system catalyzes the degradation of glycine. The H protein shuttles the methylamine group of glycine from the P protein to the T protein. This chain is Glycine cleavage system H protein, found in Nitrosomonas europaea (strain ATCC 19718 / CIP 103999 / KCTC 2705 / NBRC 14298).